The primary structure comprises 300 residues: Ribosomal protein L11 methyltransferase (300 aa).

S-adenosyl-L-methionine-binding residues include threonine 152, glycine 173, aspartate 195, and asparagine 234.

This sequence belongs to the methyltransferase superfamily. PrmA family.

Its subcellular location is the cytoplasm. The catalysed reaction is L-lysyl-[protein] + 3 S-adenosyl-L-methionine = N(6),N(6),N(6)-trimethyl-L-lysyl-[protein] + 3 S-adenosyl-L-homocysteine + 3 H(+). Its function is as follows. Methylates ribosomal protein L11. The sequence is that of Ribosomal protein L11 methyltransferase from Paraburkholderia xenovorans (strain LB400).